We begin with the raw amino-acid sequence, 338 residues long: Plasminogen (338 aa).

In terms of domain architecture, Kringle 5 spans 9-88 (CMLGIGKGYQ…LFDYCDVPQC (80 aa)). 9 disulfides stabilise this stretch: cysteine 9–cysteine 88, cysteine 30–cysteine 71, cysteine 59–cysteine 83, cysteine 95–cysteine 213, cysteine 105–cysteine 113, cysteine 135–cysteine 151, cysteine 227–cysteine 294, cysteine 257–cysteine 273, and cysteine 284–cysteine 312. In terms of domain architecture, Peptidase S1 spans 109 to 336 (IVGGCVAIAH…FINWIERIMQ (228 aa)). At serine 125 the chain carries Phosphoserine. Residues histidine 150 and aspartate 193 each act as charge relay system in the active site. Serine 288 functions as the Charge relay system in the catalytic mechanism.

Belongs to the peptidase S1 family. Plasminogen subfamily. As to quaternary structure, interacts with CSPG4 and AMOT. Interacts (via the Kringle domains) with HRG; the interaction tethers PLG to the cell surface and enhances its activation. Interacts (via Kringle 4 domain) with ADA; the interaction stimulates PLG activation when in complex with DPP4. Angiostatin: Interacts with ATP5F1A; the interaction inhibits most of the angiogenic effects of angiostatin.

It localises to the secreted. It carries out the reaction Preferential cleavage: Lys-|-Xaa &gt; Arg-|-Xaa, higher selectivity than trypsin. Converts fibrin into soluble products.. With respect to regulation, converted into plasmin by plasminogen activators, both plasminogen and its activator being bound to fibrin. Activated with catalytic amounts of streptokinase. Its function is as follows. Plasmin dissolves the fibrin of blood clots and acts as a proteolytic factor in a variety of other processes including embryonic development, tissue remodeling, tumor invasion, and inflammation. In ovulation, weakens the walls of the Graafian follicle. It activates the urokinase-type plasminogen activator, collagenases and several complement zymogens, such as C1, C4 and C5. Cleavage of fibronectin and laminin leads to cell detachment and apoptosis. Also cleaves fibrin, thrombospondin and von Willebrand factor. Its role in tissue remodeling and tumor invasion may be modulated by CSPG4. Binds to cells. In Equus caballus (Horse), this protein is Plasminogen (PLG).